A 349-amino-acid chain; its full sequence is Hydroxymethylglutaryl-CoA synthase (349 aa).

Residues Asp-30 and Ala-31 each contribute to the (3S)-3-hydroxy-3-methylglutaryl-CoA site. Glu-82 (proton donor/acceptor) is an active-site residue. The (3S)-3-hydroxy-3-methylglutaryl-CoA site is built by Cys-114 and Thr-155. Cys-114 functions as the Acyl-thioester intermediate in the catalytic mechanism. Arg-203 is a CoA binding site. (3S)-3-hydroxy-3-methylglutaryl-CoA contacts are provided by Thr-205 and His-238. His-238 (proton donor/acceptor) is an active-site residue. A CoA-binding site is contributed by Lys-243. 2 residues coordinate (3S)-3-hydroxy-3-methylglutaryl-CoA: Asn-270 and Ser-300.

This sequence belongs to the thiolase-like superfamily. Archaeal HMG-CoA synthase family. As to quaternary structure, interacts with acetoacetyl-CoA thiolase that catalyzes the precedent step in the pathway and with a DUF35 protein. The acetoacetyl-CoA thiolase/HMG-CoA synthase complex channels the intermediate via a fused CoA-binding site, which allows for efficient coupling of the endergonic thiolase reaction with the exergonic HMGCS reaction.

It carries out the reaction acetoacetyl-CoA + acetyl-CoA + H2O = (3S)-3-hydroxy-3-methylglutaryl-CoA + CoA + H(+). It functions in the pathway metabolic intermediate biosynthesis; (R)-mevalonate biosynthesis; (R)-mevalonate from acetyl-CoA: step 2/3. Its function is as follows. Catalyzes the condensation of acetyl-CoA with acetoacetyl-CoA to form 3-hydroxy-3-methylglutaryl-CoA (HMG-CoA). Functions in the mevalonate (MVA) pathway leading to isopentenyl diphosphate (IPP), a key precursor for the biosynthesis of isoprenoid compounds that are building blocks of archaeal membrane lipids. This Methanococcus maripaludis (strain C5 / ATCC BAA-1333) protein is Hydroxymethylglutaryl-CoA synthase.